A 244-amino-acid chain; its full sequence is Thaumatin-like protein 1 (244 aa).

Positions 1 to 22 (MKFEALIGLVLVFLSEHAGVYS) are cleaved as a signal peptide. Intrachain disulfides connect Cys-31–Cys-243, Cys-79–Cys-89, Cys-94–Cys-101, Cys-149–Cys-232, Cys-154–Cys-215, Cys-162–Cys-178, Cys-182–Cys-191, and Cys-192–Cys-202. N-linked (GlcNAc...) asparagine glycosylation is present at Asn-150.

It belongs to the thaumatin family. Post-translationally, N-glycosylated. Style.

The protein localises to the secreted. This Pyrus pyrifolia (Chinese pear) protein is Thaumatin-like protein 1 (TL1).